A 191-amino-acid chain; its full sequence is dCTP deaminase, dUMP-forming (191 aa).

DCTP contacts are provided by residues 101 to 106 (KSSLGR), Asp119, 127 to 129 (TLE), Gln148, Tyr162, and Gln174. Glu129 acts as the Proton donor/acceptor in catalysis. Residues 169–191 (NRYQGQRGPTASRSHLNFHRTRI) form a disordered region. Over residues 171–183 (YQGQRGPTASRSH) the composition is skewed to polar residues.

It belongs to the dCTP deaminase family. Homotrimer.

The enzyme catalyses dCTP + 2 H2O = dUMP + NH4(+) + diphosphate. The protein operates within pyrimidine metabolism; dUMP biosynthesis; dUMP from dCTP: step 1/1. Functionally, bifunctional enzyme that catalyzes both the deamination of dCTP to dUTP and the hydrolysis of dUTP to dUMP without releasing the toxic dUTP intermediate. This chain is dCTP deaminase, dUMP-forming, found in Pseudarthrobacter chlorophenolicus (strain ATCC 700700 / DSM 12829 / CIP 107037 / JCM 12360 / KCTC 9906 / NCIMB 13794 / A6) (Arthrobacter chlorophenolicus).